The chain runs to 215 residues: Ribonuclease T (215 aa).

The Exonuclease domain maps to 20–194 (VVIDVETAGF…YDTERTAVLF (175 aa)). Residues D23, E25, H181, and D186 each contribute to the Mg(2+) site. H181 acts as the Proton donor/acceptor in catalysis.

Belongs to the RNase T family. Homodimer. Mg(2+) serves as cofactor.

In terms of biological role, trims short 3' overhangs of a variety of RNA species, leaving a one or two nucleotide 3' overhang. Responsible for the end-turnover of tRNA: specifically removes the terminal AMP residue from uncharged tRNA (tRNA-C-C-A). Also appears to be involved in tRNA biosynthesis. The sequence is that of Ribonuclease T from Shigella dysenteriae serotype 1 (strain Sd197).